Consider the following 482-residue polypeptide: MSSSSPNPFRRSLKFVEQWYRETPQRALDGAYEAARAIEEIEKKHFKGQPVPLRIRTESVMTNYFQSEVQKNLQFIQTRLREFKSSSLVVEVADKLKPPSIPPAPTPLDTPNTIDFTDEYDVTSEEYSSELVSPSIDAQGSLDKLAFIDAVLKRYRSASIQREAAAAASKAARASAPKSGSEMKKNIPQPLPIQSAQNSLYESEFISDDITEDPSKLDSSSFIPRSILRTATRFRKELNPDPGTEDDILNDFRNSRVRTRAAVSFVLGLMIVPLLTQQVSKNLVIGPFVDKLKGPEQIEIRINPEIENEVLTELARFEERLKFESLTSPIPLSPAEIQFQLKAKAEDLKEEYQWDLRQPLKNAISDLFSLVALAIYFVLNRQKIAVLKSFFDEIIYGLSDSAKAFIIILFTDVFVGFHSPHGWEVIVESVLSHFGLPQDRNFINMFIATFPVMLDTVFKYWIFRYLNQISPSAVATYRNMNE.

A run of 4 helical transmembrane segments spans residues 265–285, 359–379, 406–426, and 442–462; these read FVLG…NLVI, PLKN…YFVL, IIIL…WEVI, and FINM…KYWI.

This sequence belongs to the CemA family.

It is found in the cell inner membrane. Its function is as follows. Required for H(+) efflux immediately after light irradiation to form a rapid H(+) concentration gradient across the thylakoid membranes. Together with PxcL, contributes to transient H(+) uptake following dark to light transition. This chain is Proton extrusion protein PxcA, found in Acaryochloris marina (strain MBIC 11017).